The primary structure comprises 753 residues: Neuroendocrine convertase 1 (753 aa).

The N-terminal stretch at 1 to 27 (MEQRGWTLQCTAFAFFCVWCALSSVKA) is a signal peptide. The propeptide occupies 28–110 (KRQFVNEWAA…QQYEKERSKR (83 aa)). Residues 129–450 (QWYLQDTRMT…FGLLNAKALV (322 aa)) form the Peptidase S8 domain. Active-site charge relay system residues include aspartate 167 and histidine 208. 2 disulfide bridges follow: cysteine 225–cysteine 374 and cysteine 317–cysteine 347. Residue serine 382 is the Charge relay system of the active site. The N-linked (GlcNAc...) asparagine glycan is linked to asparagine 401. The 138-residue stretch at 460-597 (NVPEKKECVV…KLILHGTSSQ (138 aa)) folds into the P/Homo B domain. A disulfide bridge connects residues cysteine 467 and cysteine 494. Positions 633–651 (QKSLNGNLLVPKNSSSSNV) are enriched in polar residues. Residues 633 to 663 (QKSLNGNLLVPKNSSSSNVEGRRDEQVQGTP) are disordered. Asparagine 645 is a glycosylation site (N-linked (GlcNAc...) asparagine).

The protein belongs to the peptidase S8 family. Furin subfamily. Ca(2+) is required as a cofactor.

The protein resides in the cytoplasmic vesicle. It localises to the secretory vesicle. The catalysed reaction is Release of protein hormones, neuropeptides and renin from their precursors, generally by hydrolysis of -Lys-Arg-|- bonds.. Functionally, involved in the processing of hormone and other protein precursors at sites comprised of pairs of basic amino acid residues. Substrates include POMC, renin, enkephalin, dynorphin, somatostatin, insulin and AGRP. The polypeptide is Neuroendocrine convertase 1 (Pcsk1) (Mus cookii (Cook's mouse)).